The following is a 670-amino-acid chain: Amyloid beta A4 precursor protein-binding family B member 1-interacting protein (670 aa).

Phosphoserine is present on S55. The region spanning 179–266 (KKLVVKVHMD…KVLFLEKEER (88 aa)) is the Ras-associating domain. Residues 313 to 422 (VPELEGALYL…WVMGIRIAKY (110 aa)) enclose the PH domain. The interval 449–653 (VGTPMPAQPS…PGAPGNSEQD (205 aa)) is disordered. Positions 456–475 (QPSTVSSGLKTGTSQPNGQM) are enriched in polar residues. A Phosphoserine modification is found at S532. T534 carries the post-translational modification Phosphothreonine. At S537 the chain carries Phosphoserine. Composition is skewed to pro residues over residues 553–567 (PHPP…PPPP), 576–599 (LPPP…PPPA), 606–615 (LPPPPPPPPC), and 625–634 (PLPPKKPLVP).

Belongs to the MRL family. In terms of assembly, interacts, through the N-terminal Pro-rich region, with the WW domain of APBB1. Interacts with RAP1A, PFN1, VASP and ENAH. In terms of tissue distribution, ubiquitously expressed with high expression in the hematopoietic system.

The protein localises to the cell membrane. Its subcellular location is the cell projection. The protein resides in the lamellipodium. It is found in the cell junction. It localises to the focal adhesion. The protein localises to the cytoplasm. Its subcellular location is the cytoskeleton. Its function is as follows. Appears to function in the signal transduction from Ras activation to actin cytoskeletal remodeling. Suppresses insulin-induced promoter activities through AP1 and SRE. Mediates Rap1-induced adhesion. This chain is Amyloid beta A4 precursor protein-binding family B member 1-interacting protein (Apbb1ip), found in Mus musculus (Mouse).